We begin with the raw amino-acid sequence, 460 residues long: MSTLVNTTRRSIVIAIHQQLRRMSVQKRKDQSATIAVGQMRSTSDKAANLSQVIELVDRAKSQNACMLFLPECCDFVGESRTQTIELSEGLDGELMAQYRELAKCNKIWISLGGVHERNDQKIFNAHVLLNEKGELAAVYRKLHMFDVTTKEVRLRESDTVTPGYCLERPVSTPVGQIGLQICYDLRFAEPAVLLRKLGANLLTYPSAFTYATGKAHWEILLRARAIETQCFVVAAAQIGWHNQKRQSWGHSMIVSPWGNVLADCSEQELDIGTAEVDLSVLQSLYQTMPCFEHRRNDIYALTAYNLRSKEPTQDRPFATNIVDKRTIFYESEHCFAFTNLRCVVKGHVLVSTKRVTPRLCGLDCAEMADMFTTVCLVQRLLEKIYQTTSATVTVQDGAQAGQTVPHVHFHIMPRRLGDFGHNDQIYVKLDERAEEKPPRTIEERIEEAQIYRKFLTDIS.

Positions 33–279 (ATIAVGQMRS…LDIGTAEVDL (247 aa)) constitute a CN hydrolase domain. Residues Glu72, Lys142, and Cys183 contribute to the active site. Positions 315 to 422 (DRPFATNIVD…MPRRLGDFGH (108 aa)) constitute an HIT domain. The short motif at 407–411 (HVHFH) is the Histidine triad motif element. The active-site Tele-AMP-histidine intermediate is the His409.

This sequence in the N-terminal section; belongs to the UPF0012 family. In terms of assembly, homotetramer. Requires Mn(2+) as cofactor.

The enzyme catalyses P(1),P(3)-bis(5'-adenosyl) triphosphate + H2O = AMP + ADP + 2 H(+). Functionally, cleaves A-5'-PPP-5'A to yield AMP and ADP. This chain is Nitrilase and fragile histidine triad fusion protein NitFhit, found in Drosophila melanogaster (Fruit fly).